We begin with the raw amino-acid sequence, 370 residues long: MLTFDIINQSLESRARTGRITTAHGVIETPIFMPVGTLGTVKAVSVEELKACQAQIILGNTYHLYLRPGCEVMAHMGGLHPFMNWDRPILTDSGGFQFFSLAKLAKFKDEGVSFQSHIDGSRHLFTPERAVEIQSILGSDIMMSLDWCMGYPATRKEAMGALEKTTQWAERGRNFWIEQGRVNNLFGIVQGGMFADLRSISARQLADLDFPGYAIGGLSVGEPTELMYEMADHTVPQLPLEKPKYVMGVGTPENLVELAGMGVDMFDCVMPSRNARNGQLFTSTGTMNISNAAFRLDESPLDAECSCYTCQNYSRAYLRHLYKSRELLAYRLNTIHNLHYYLDLMHQMRNAINQGRFMAFKQEFYRKRER.

The active-site Proton acceptor is the Asp92. Substrate-binding positions include 92-96, Asp146, Gln190, and Gly217; that span reads DSGGF. Positions 248-254 are RNA binding; it reads GVGTPEN. Asp267 acts as the Nucleophile in catalysis. Residues Cys305, Cys307, Cys310, and His336 each coordinate Zn(2+).

The protein belongs to the queuine tRNA-ribosyltransferase family. As to quaternary structure, homodimer. Within each dimer, one monomer is responsible for RNA recognition and catalysis, while the other monomer binds to the replacement base PreQ1. Zn(2+) serves as cofactor.

The enzyme catalyses 7-aminomethyl-7-carbaguanine + guanosine(34) in tRNA = 7-aminomethyl-7-carbaguanosine(34) in tRNA + guanine. The protein operates within tRNA modification; tRNA-queuosine biosynthesis. Its function is as follows. Catalyzes the base-exchange of a guanine (G) residue with the queuine precursor 7-aminomethyl-7-deazaguanine (PreQ1) at position 34 (anticodon wobble position) in tRNAs with GU(N) anticodons (tRNA-Asp, -Asn, -His and -Tyr). Catalysis occurs through a double-displacement mechanism. The nucleophile active site attacks the C1' of nucleotide 34 to detach the guanine base from the RNA, forming a covalent enzyme-RNA intermediate. The proton acceptor active site deprotonates the incoming PreQ1, allowing a nucleophilic attack on the C1' of the ribose to form the product. After dissociation, two additional enzymatic reactions on the tRNA convert PreQ1 to queuine (Q), resulting in the hypermodified nucleoside queuosine (7-(((4,5-cis-dihydroxy-2-cyclopenten-1-yl)amino)methyl)-7-deazaguanosine). This is Queuine tRNA-ribosyltransferase from Desulforapulum autotrophicum (strain ATCC 43914 / DSM 3382 / VKM B-1955 / HRM2) (Desulfobacterium autotrophicum).